The following is a 906-amino-acid chain: Probable helicase HelY (906 aa).

The 159-residue stretch at 26–184 (CSALERGHGV…WIQTVRGDTT (159 aa)) folds into the Helicase ATP-binding domain. Residue 39-46 (APTGAGKT) coordinates ATP. Residues 132-135 (DEVH) carry the DEVH box motif. Residues 259–463 (GRPEVIAKLD…SYNMTINLVH (205 aa)) enclose the Helicase C-terminal domain.

This sequence belongs to the helicase family. SKI2 subfamily.

In Mycobacterium tuberculosis (strain CDC 1551 / Oshkosh), this protein is Probable helicase HelY (helY).